The following is a 158-amino-acid chain: Small ribosomal subunit protein uS15 (158 aa).

Residues 1–18 (MARMHARKRGKSGSKRPP) are compositionally biased toward basic residues. Residues 1 to 21 (MARMHARKRGKSGSKRPPRTA) form a disordered region.

It belongs to the universal ribosomal protein uS15 family. In terms of assembly, part of the 30S ribosomal subunit.

This is Small ribosomal subunit protein uS15 from Pyrococcus horikoshii (strain ATCC 700860 / DSM 12428 / JCM 9974 / NBRC 100139 / OT-3).